A 980-amino-acid chain; its full sequence is Valine--tRNA ligase (980 aa).

The short motif at 43-53 (PNVTGTLHMGH) is the 'HIGH' region element. The short motif at 586-590 (KMSKS) is the 'KMSKS' region element. Lys589 is a binding site for ATP. A coiled-coil region spans residues 914 to 978 (LVDMDAERTR…QLTGLREQRA (65 aa)).

The protein belongs to the class-I aminoacyl-tRNA synthetase family. ValS type 1 subfamily. In terms of assembly, monomer.

It localises to the cytoplasm. It catalyses the reaction tRNA(Val) + L-valine + ATP = L-valyl-tRNA(Val) + AMP + diphosphate. Catalyzes the attachment of valine to tRNA(Val). As ValRS can inadvertently accommodate and process structurally similar amino acids such as threonine, to avoid such errors, it has a 'posttransfer' editing activity that hydrolyzes mischarged Thr-tRNA(Val) in a tRNA-dependent manner. This is Valine--tRNA ligase from Xanthomonas euvesicatoria pv. vesicatoria (strain 85-10) (Xanthomonas campestris pv. vesicatoria).